The sequence spans 502 residues: NAD(P)H-quinone oxidoreductase subunit 2, chloroplastic (502 aa).

A run of 14 helical transmembrane segments spans residues 15–35, 42–62, 79–99, 108–128, 132–152, 167–187, 210–230, 253–275, 278–298, 307–327, 334–354, 375–395, 413–433, and 468–488; these read VLPEAIIICSSLFILIIDLIF, VLPYMAILGLILSMLSLLFQW, LSIAFRLLIALSSMLCVLLSI, TLSEFLVIFLTATLGAMLLCG, ILMIFLSLETLGLCSYILTGY, LLIGAASSSILLYGFSLLYGL, LASLVALALIIVGISFKIAAA, VSSKAAGLMLATRIMTILFPYII, WHNIFQILAILSMAIGNIIAI, LGYSSIAQAGFLLVGLLAGNI, LVYMLIYLFMNLGAFACVILF, ILALCLSICLLSLGGIPPFGG, LLVFVGLLTSVISIFYYIKII, and ILICVIGTTISGIFVNPIISI.

This sequence belongs to the complex I subunit 2 family. As to quaternary structure, NDH is composed of at least 16 different subunits, 5 of which are encoded in the nucleus.

The protein localises to the plastid. The protein resides in the chloroplast thylakoid membrane. The catalysed reaction is a plastoquinone + NADH + (n+1) H(+)(in) = a plastoquinol + NAD(+) + n H(+)(out). It carries out the reaction a plastoquinone + NADPH + (n+1) H(+)(in) = a plastoquinol + NADP(+) + n H(+)(out). Functionally, NDH shuttles electrons from NAD(P)H:plastoquinone, via FMN and iron-sulfur (Fe-S) centers, to quinones in the photosynthetic chain and possibly in a chloroplast respiratory chain. The immediate electron acceptor for the enzyme in this species is believed to be plastoquinone. Couples the redox reaction to proton translocation, and thus conserves the redox energy in a proton gradient. The chain is NAD(P)H-quinone oxidoreductase subunit 2, chloroplastic from Mesostigma viride (Green alga).